We begin with the raw amino-acid sequence, 288 residues long: Protein PGR (288 aa).

Transmembrane regions (helical) follow at residues 1–21 (METS…LIAF), 29–49 (LDLS…TAGF), 91–111 (VLCN…LTGW), 123–143 (IVTA…GDTW), 177–197 (LLAA…FGLF), 210–230 (LLVI…DSIL), and 268–288 (VNFV…VYIF).

Belongs to the TMEM19 family. In terms of tissue distribution, expressed in the vasculature of leaves, roots, inflorescences, siliques, anther filaments and sepals. Detected primarily in the phloem tissues, including in the root ans shoot apical meristems.

The protein resides in the cell membrane. Its function is as follows. Involved in the glucose-triggered developmental leaf growth process. The chain is Protein PGR from Arabidopsis thaliana (Mouse-ear cress).